The sequence spans 251 residues: Segregation and condensation protein A (251 aa).

It belongs to the ScpA family. Component of a cohesin-like complex composed of ScpA, ScpB and the Smc homodimer, in which ScpA and ScpB bind to the head domain of Smc. The presence of the three proteins is required for the association of the complex with DNA.

It is found in the cytoplasm. In terms of biological role, participates in chromosomal partition during cell division. May act via the formation of a condensin-like complex containing Smc and ScpB that pull DNA away from mid-cell into both cell halves. The polypeptide is Segregation and condensation protein A (Clostridium botulinum (strain Alaska E43 / Type E3)).